Consider the following 330-residue polypeptide: T-cell surface glycoprotein CD1b4 (330 aa).

The signal sequence occupies residues 1-15 (MLLLALAFFFPAGDT). The Extracellular segment spans residues 16 to 299 (QNVLPGKISF…LYWGHSISIG (284 aa)). N-linked (GlcNAc...) asparagine glycosylation is found at Asn-35, Asn-72, and Asn-143. Intrachain disulfides connect Cys-117-Cys-181 and Cys-221-Cys-276. The 111-residue stretch at 182 to 292 (PRYLMSVIEA…LEGQDIILYW (111 aa)) folds into the Ig-like domain. Residues 300–320 (WIILAVLVPCLIVLVLFILWF) form a helical membrane-spanning segment. Over 321–330 (YRRWSYEDIF) the chain is Cytoplasmic. Positions 326 to 329 (YEDI) match the Internalization signal motif.

As to quaternary structure, heterodimer with B2M (beta-2-microglobulin). Interacts with saposin C.

The protein resides in the cell membrane. The protein localises to the endosome membrane. Its subcellular location is the lysosome membrane. Functionally, antigen-presenting protein that binds self and non-self lipid and glycolipid antigens and presents them to T-cell receptors on natural killer T-cells. The sequence is that of T-cell surface glycoprotein CD1b4 (CD1B4) from Cavia porcellus (Guinea pig).